The following is a 451-amino-acid chain: UDP-N-acetylmuramoylalanine--D-glutamate ligase (451 aa).

Position 119–125 (119–125) interacts with ATP; that stretch reads GSNGKTT.

The protein belongs to the MurCDEF family.

The protein resides in the cytoplasm. It catalyses the reaction UDP-N-acetyl-alpha-D-muramoyl-L-alanine + D-glutamate + ATP = UDP-N-acetyl-alpha-D-muramoyl-L-alanyl-D-glutamate + ADP + phosphate + H(+). It functions in the pathway cell wall biogenesis; peptidoglycan biosynthesis. In terms of biological role, cell wall formation. Catalyzes the addition of glutamate to the nucleotide precursor UDP-N-acetylmuramoyl-L-alanine (UMA). The polypeptide is UDP-N-acetylmuramoylalanine--D-glutamate ligase (Geobacillus sp. (strain WCH70)).